A 267-amino-acid chain; its full sequence is GTP cyclohydrolase FolE2 (267 aa).

It belongs to the GTP cyclohydrolase IV family.

It catalyses the reaction GTP + H2O = 7,8-dihydroneopterin 3'-triphosphate + formate + H(+). It participates in cofactor biosynthesis; 7,8-dihydroneopterin triphosphate biosynthesis; 7,8-dihydroneopterin triphosphate from GTP: step 1/1. Converts GTP to 7,8-dihydroneopterin triphosphate. The chain is GTP cyclohydrolase FolE2 from Geobacter sp. (strain M21).